Here is a 312-residue protein sequence, read N- to C-terminus: 4-diphosphocytidyl-2-C-methyl-D-erythritol kinase (312 aa).

The active site involves K16. ATP is bound at residue 101–111; that stretch reads PIGAGLAGGSS. The active site involves D143.

The protein belongs to the GHMP kinase family. IspE subfamily.

It catalyses the reaction 4-CDP-2-C-methyl-D-erythritol + ATP = 4-CDP-2-C-methyl-D-erythritol 2-phosphate + ADP + H(+). Its pathway is isoprenoid biosynthesis; isopentenyl diphosphate biosynthesis via DXP pathway; isopentenyl diphosphate from 1-deoxy-D-xylulose 5-phosphate: step 3/6. In terms of biological role, catalyzes the phosphorylation of the position 2 hydroxy group of 4-diphosphocytidyl-2C-methyl-D-erythritol. This chain is 4-diphosphocytidyl-2-C-methyl-D-erythritol kinase, found in Prochlorococcus marinus (strain MIT 9515).